A 370-amino-acid polypeptide reads, in one-letter code: MLPRRLLAAWLAGTRGGGLLALLANQCRFVTGLRVRRAQQIAQLYGRLYSESSRRVLLGRLWRRLHGRPGHASALMAALAGVFVWDEERIQEEELQRSINEMKRLEEMSNMFQSSGVQHHPPEPKAQTEGNEDSEGKEQRWEMVMDKKHFKLWRRPITGTHLYQYRVFGTYTDVTPRQFFNVQLDTEYRKKWDALVIKLEVIERDVVSGSEVLHWVTHFPYPMYSRDYVYVRRYSVDQENNMMVLVSRAVEHPSVPESPEFVRVRSYESQMVIRPHKSFDENGFDYLLTYSDNPQTVFPRYCVSWMVSSGMPDFLEKLHMATLKAKNMEIKVKDYISAKPLEMSSEAKATSQSSERKNEGSCGPARIEYA.

A mitochondrion-targeting transit peptide spans 1 to 58; that stretch reads MLPRRLLAAWLAGTRGGGLLALLANQCRFVTGLRVRRAQQIAQLYGRLYSESSRRVLL. Residues 86–111 adopt a coiled-coil conformation; it reads DEERIQEEELQRSINEMKRLEEMSNM. Disordered regions lie at residues 111–138 and 343–370; these read MFQS…EGKE and MSSE…IEYA. The START domain maps to 112-327; sequence FQSSGVQHHP…LHMATLKAKN (216 aa).

Post-translationally, proteolytically cleaved by PARL. In terms of tissue distribution, expressed in nasal epithelial cells. Down-regulated in nasal epithelial cells in patients experiencing an asthma exacerbation as compared to stable asthmatics and healthy controls.

The protein resides in the mitochondrion. In terms of biological role, may play a protective role in mucosal tissues by preventing exaggerated allergic responses. The chain is StAR-related lipid transfer protein 7, mitochondrial (STARD7) from Homo sapiens (Human).